We begin with the raw amino-acid sequence, 249 residues long: Diaminopimelate epimerase (249 aa).

Asparagine 11 and asparagine 60 together coordinate substrate. The active-site Proton donor is cysteine 69. Residues 70-71 (GN), asparagine 164, and 182-183 (ER) contribute to the substrate site. Cysteine 192 functions as the Proton acceptor in the catalytic mechanism. 193-194 (GT) is a binding site for substrate.

It belongs to the diaminopimelate epimerase family. As to quaternary structure, homodimer.

It localises to the cytoplasm. It catalyses the reaction (2S,6S)-2,6-diaminopimelate = meso-2,6-diaminopimelate. It participates in amino-acid biosynthesis; L-lysine biosynthesis via DAP pathway; DL-2,6-diaminopimelate from LL-2,6-diaminopimelate: step 1/1. Catalyzes the stereoinversion of LL-2,6-diaminopimelate (L,L-DAP) to meso-diaminopimelate (meso-DAP), a precursor of L-lysine and an essential component of the bacterial peptidoglycan. This is Diaminopimelate epimerase from Campylobacter jejuni subsp. jejuni serotype O:2 (strain ATCC 700819 / NCTC 11168).